A 441-amino-acid chain; its full sequence is Xaa-Pro dipeptidase (441 aa).

The Mn(2+) site is built by Asp244, Asp255, His336, Glu381, and Glu420.

This sequence belongs to the peptidase M24B family. Bacterial-type prolidase subfamily. The cofactor is Mn(2+).

It catalyses the reaction Xaa-L-Pro dipeptide + H2O = an L-alpha-amino acid + L-proline. In terms of biological role, splits dipeptides with a prolyl residue in the C-terminal position. This is Xaa-Pro dipeptidase from Xanthomonas campestris pv. campestris (strain 8004).